A 400-amino-acid polypeptide reads, in one-letter code: MIGVIGVKRNVDIAIREKLALYPKKHKKYVGELLNSFKEVVILNTCNRTEIYFNCTEEISEDEIFDKIFNVFNWNDDLKKYMFLSKEKRAVTHLMEVICGFHSRILGEDQILGQIKDAYKTAISDNSISSELQKMFEIAIACGKKFKTKCKMFEVPVSSVSISINSALLKGCRKFMVLGYGEIGKLAIKHLLSHKVECIYLIVRDKSKASDLEGEIVEILDFNEKNHVINEVDCIVSCTAAPHTVVRNEDIKTEGDIIHIYDLAVPRDVDKELSEKERVILKDIDEISKIDDKNKKIRKERMEEYKHIVEESIEEFLNWLKIREVSSKIRNIKIRENEICSERIKTFSNKGNGENAKLAERMIKSTADAYVNRAIELLKSEALKGSDSSCAEIIEKIFLT.

Residues 45-48, Ser103, 108-110, and Gln114 contribute to the substrate site; these read TCNR and EDQ. Catalysis depends on Cys46, which acts as the Nucleophile. 179 to 184 provides a ligand contact to NADP(+); sequence GYGEIG.

The protein belongs to the glutamyl-tRNA reductase family. In terms of assembly, homodimer.

The catalysed reaction is (S)-4-amino-5-oxopentanoate + tRNA(Glu) + NADP(+) = L-glutamyl-tRNA(Glu) + NADPH + H(+). Its pathway is porphyrin-containing compound metabolism; protoporphyrin-IX biosynthesis; 5-aminolevulinate from L-glutamyl-tRNA(Glu): step 1/2. In terms of biological role, catalyzes the NADPH-dependent reduction of glutamyl-tRNA(Glu) to glutamate 1-semialdehyde (GSA). The polypeptide is Glutamyl-tRNA reductase (Clostridium perfringens (strain SM101 / Type A)).